Reading from the N-terminus, the 117-residue chain is Large ribosomal subunit protein bL19 (117 aa).

This sequence belongs to the bacterial ribosomal protein bL19 family.

In terms of biological role, this protein is located at the 30S-50S ribosomal subunit interface and may play a role in the structure and function of the aminoacyl-tRNA binding site. The chain is Large ribosomal subunit protein bL19 from Colwellia psychrerythraea (strain 34H / ATCC BAA-681) (Vibrio psychroerythus).